Reading from the N-terminus, the 123-residue chain is 1,4-dihydroxy-2-naphthoyl-CoA hydrolase (123 aa).

The active-site Nucleophile or proton acceptor is the Glu-46.

It belongs to the thioesterase PaaI family.

It carries out the reaction 1,4-dihydroxy-2-naphthoyl-CoA + H2O = 1,4-dihydroxy-2-naphthoate + CoA + H(+). The protein operates within quinol/quinone metabolism; menaquinone biosynthesis. Its function is as follows. Catalyzes the hydrolysis of 1,4-dihydroxy-2-naphthoyl-CoA (DHNA-CoA) to 1,4-dihydroxy-2-naphthoate (DHNA) and free coenzyme A. Production of DHNA is required for protection against bacteriolysis in the cytosol of macrophages and tissue-specific virulence in vivo, suggesting that MenI is required to protect the bacteria from killing in the macrophage cytosol. In Listeria monocytogenes serotype 1/2a (strain 10403S), this protein is 1,4-dihydroxy-2-naphthoyl-CoA hydrolase.